The following is a 150-amino-acid chain: UPF0179 protein Mbur_1033 (150 aa).

This sequence belongs to the UPF0179 family.

The protein is UPF0179 protein Mbur_1033 of Methanococcoides burtonii (strain DSM 6242 / NBRC 107633 / OCM 468 / ACE-M).